A 246-amino-acid chain; its full sequence is tRNA pseudouridine synthase A (246 aa).

The Nucleophile role is filled by Asp-53. Residue Tyr-111 participates in substrate binding.

The protein belongs to the tRNA pseudouridine synthase TruA family. As to quaternary structure, homodimer.

It carries out the reaction uridine(38/39/40) in tRNA = pseudouridine(38/39/40) in tRNA. In terms of biological role, formation of pseudouridine at positions 38, 39 and 40 in the anticodon stem and loop of transfer RNAs. The polypeptide is tRNA pseudouridine synthase A (Anoxybacillus flavithermus (strain DSM 21510 / WK1)).